The sequence spans 281 residues: ATP phosphoribosyltransferase (281 aa).

This sequence belongs to the ATP phosphoribosyltransferase family. Long subfamily. Mg(2+) serves as cofactor.

The protein localises to the cytoplasm. It catalyses the reaction 1-(5-phospho-beta-D-ribosyl)-ATP + diphosphate = 5-phospho-alpha-D-ribose 1-diphosphate + ATP. The protein operates within amino-acid biosynthesis; L-histidine biosynthesis; L-histidine from 5-phospho-alpha-D-ribose 1-diphosphate: step 1/9. With respect to regulation, feedback inhibited by histidine. Catalyzes the condensation of ATP and 5-phosphoribose 1-diphosphate to form N'-(5'-phosphoribosyl)-ATP (PR-ATP). Has a crucial role in the pathway because the rate of histidine biosynthesis seems to be controlled primarily by regulation of HisG enzymatic activity. The polypeptide is ATP phosphoribosyltransferase (hisG) (Archaeoglobus fulgidus (strain ATCC 49558 / DSM 4304 / JCM 9628 / NBRC 100126 / VC-16)).